Consider the following 431-residue polypeptide: Serine hydroxymethyltransferase 2 (431 aa).

Residues L131 and 135–137 (GHL) contribute to the (6S)-5,6,7,8-tetrahydrofolate site. N6-(pyridoxal phosphate)lysine is present on K240.

The protein belongs to the SHMT family. Homodimer. It depends on pyridoxal 5'-phosphate as a cofactor.

Its subcellular location is the cytoplasm. It carries out the reaction (6R)-5,10-methylene-5,6,7,8-tetrahydrofolate + glycine + H2O = (6S)-5,6,7,8-tetrahydrofolate + L-serine. It functions in the pathway one-carbon metabolism; tetrahydrofolate interconversion. It participates in amino-acid biosynthesis; glycine biosynthesis; glycine from L-serine: step 1/1. In terms of biological role, catalyzes the reversible interconversion of serine and glycine with tetrahydrofolate (THF) serving as the one-carbon carrier. This reaction serves as the major source of one-carbon groups required for the biosynthesis of purines, thymidylate, methionine, and other important biomolecules. Also exhibits THF-independent aldolase activity toward beta-hydroxyamino acids, producing glycine and aldehydes, via a retro-aldol mechanism. In Photobacterium profundum (strain SS9), this protein is Serine hydroxymethyltransferase 2.